The following is a 376-amino-acid chain: Putative glutamate--cysteine ligase 2 (376 aa).

This sequence belongs to the glutamate--cysteine ligase type 2 family. YbdK subfamily.

It catalyses the reaction L-cysteine + L-glutamate + ATP = gamma-L-glutamyl-L-cysteine + ADP + phosphate + H(+). Functionally, ATP-dependent carboxylate-amine ligase which exhibits weak glutamate--cysteine ligase activity. The protein is Putative glutamate--cysteine ligase 2 of Mycobacterium bovis (strain ATCC BAA-935 / AF2122/97).